The following is a 155-amino-acid chain: Small ribosomal subunit protein eS19 (155 aa).

This sequence belongs to the eukaryotic ribosomal protein eS19 family. In terms of assembly, component of the small ribosomal subunit.

It localises to the cytoplasm. Its function is as follows. Component of the small ribosomal subunit. The ribosome is a large ribonucleoprotein complex responsible for the synthesis of proteins in the cell. Required for proper maturation of the small (40S) ribosomal subunit. This Entamoeba histolytica (strain ATCC 30459 / HM-1:IMSS / ABRM) protein is Small ribosomal subunit protein eS19 (RPS19).